Consider the following 97-residue polypeptide: MKTALFLVFALAFIAVEGKMSRACSKPGQTVLAPDGCNHCRCSEKGILMACTKMMCPPRTIEKSCKPGTTFKHKDGCNTCKCSDDGKNALCTSKLCL.

A signal peptide spans 1–20 (MKTALFLVFALAFIAVEGKM). Pacifastin domains follow at residues 22–59 (RACS…CPPR) and 62–97 (EKSC…KLCL). 3 disulfide bridges follow: cysteine 24/cysteine 42, cysteine 37/cysteine 56, and cysteine 40/cysteine 51. Positions 57 to 59 (PPR) are pro-Pro-Arg motif necessary for proteolytic processing. Cystine bridges form between cysteine 65–cysteine 82, cysteine 77–cysteine 96, and cysteine 80–cysteine 91.

This sequence belongs to the protease inhibitor I19 family. As to expression, expressed by the venom gland.

Its subcellular location is the secreted. Its function is as follows. Inhibits trypsin activity and prophenoloxidase (PPO) activation, an enzyme essential for both clotting and insect innate immune responses. It does not inhibit activity of chymotrypsin and protease K, and has no effect on phenoloxidase (PO) activity. The chain is U-reduvitoxin-Pr11a from Platymeris rhadamanthus (Red spot assassin bug).